The sequence spans 316 residues: Cuticle collagen 12 (316 aa).

The signal sequence occupies residues 1 to 36 (MTEDPKQIAQETESLRKVAFFGIAVSTIATLTAIIA). Composition is skewed to low complexity over residues 127–157 (SGAA…PGQD) and 183–204 (APGQ…GAAL). The tract at residues 127 to 316 (SGAAGPAGSP…CPPPRTAPGY (190 aa)) is disordered. Triple-helical region regions lie at residues 128–157 (GAAG…PGQD), 176–202 (GPPG…SGGA), 206–235 (GPPG…PGQV), 240–266 (GTPG…AGSS), and 269–304 (GGPG…EGAC). Residues 205–217 (PGPPGPAGPPGPA) show a composition bias toward pro residues. Low complexity predominate over residues 219–234 (QPGSNGNAGAPGAPGQ). The segment covering 241–251 (TPGPAGPPGSP) has biased composition (pro residues). 2 stretches are compositionally biased toward low complexity: residues 256-266 (APGQPGQAGSS) and 276-295 (DAGA…PGQD). The segment covering 307–316 (CPPPRTAPGY) has biased composition (pro residues).

The protein belongs to the cuticular collagen family. In terms of assembly, collagen polypeptide chains are complexed within the cuticle by disulfide bonds and other types of covalent cross-links.

Its function is as follows. Nematode cuticles are composed largely of collagen-like proteins. The cuticle functions both as an exoskeleton and as a barrier to protect the worm from its environment. This chain is Cuticle collagen 12 (col-12), found in Caenorhabditis elegans.